Reading from the N-terminus, the 932-residue chain is Isoleucine--tRNA ligase (932 aa).

A 'HIGH' region motif is present at residues 58–68 (PYANGDIHIGH). Residue E570 coordinates L-isoleucyl-5'-AMP. Positions 611–615 (KMSKS) match the 'KMSKS' region motif. K614 provides a ligand contact to ATP. Positions 895, 898, 915, and 918 each coordinate Zn(2+).

Belongs to the class-I aminoacyl-tRNA synthetase family. IleS type 1 subfamily. In terms of assembly, monomer. Zn(2+) serves as cofactor.

It is found in the cytoplasm. It catalyses the reaction tRNA(Ile) + L-isoleucine + ATP = L-isoleucyl-tRNA(Ile) + AMP + diphosphate. Functionally, catalyzes the attachment of isoleucine to tRNA(Ile). As IleRS can inadvertently accommodate and process structurally similar amino acids such as valine, to avoid such errors it has two additional distinct tRNA(Ile)-dependent editing activities. One activity is designated as 'pretransfer' editing and involves the hydrolysis of activated Val-AMP. The other activity is designated 'posttransfer' editing and involves deacylation of mischarged Val-tRNA(Ile). This chain is Isoleucine--tRNA ligase, found in Dechloromonas aromatica (strain RCB).